The chain runs to 278 residues: Ras-related protein rapC (278 aa).

10 to 17 (GASGTGKT) is a GTP binding site. Positions 32-40 (YDPTIEDLY) match the Effector region motif. Residues 58 to 62 (DTSGT) and 119 to 122 (NKCD) each bind GTP. 2 disordered regions span residues 176–209 (NGSSNGKDKKDKKEKKTHKKDSGSNNSSINSSSS) and 236–278 (STSS…CLIM). 2 stretches are compositionally biased toward low complexity: residues 198-209 (GSNNSSINSSSS) and 236-251 (STSSTSVNNLNQSQTN). C275 carries the post-translational modification Cysteine methyl ester. C275 carries the S-geranylgeranyl cysteine lipid modification. The propeptide at 276 to 278 (LIM) is removed in mature form.

Belongs to the small GTPase superfamily. Ras family.

It is found in the cell membrane. It catalyses the reaction GTP + H2O = GDP + phosphate + H(+). The protein is Ras-related protein rapC (rapC) of Dictyostelium discoideum (Social amoeba).